Consider the following 225-residue polypeptide: Cytidylate kinase (225 aa).

An ATP-binding site is contributed by Gly-12 to Thr-20.

Belongs to the cytidylate kinase family. Type 1 subfamily.

It localises to the cytoplasm. The enzyme catalyses CMP + ATP = CDP + ADP. It catalyses the reaction dCMP + ATP = dCDP + ADP. The polypeptide is Cytidylate kinase (Edwardsiella ictaluri (strain 93-146)).